The chain runs to 800 residues: Phenylalanine--tRNA ligase beta subunit (800 aa).

The tRNA-binding domain maps to 39-154 (TKDIKKLVVG…EAVKPGTDAL (116 aa)). A B5 domain is found at 408-483 (SFVTPIEITA…RIYGYDEIPS (76 aa)). The Mg(2+) site is built by D461, D467, E470, and E471. The region spanning 708 to 800 (PRFPGVTRDI…ALKKHGAIIR (93 aa)) is the FDX-ACB domain.

It belongs to the phenylalanyl-tRNA synthetase beta subunit family. Type 1 subfamily. Tetramer of two alpha and two beta subunits. Requires Mg(2+) as cofactor.

It localises to the cytoplasm. The catalysed reaction is tRNA(Phe) + L-phenylalanine + ATP = L-phenylalanyl-tRNA(Phe) + AMP + diphosphate + H(+). The sequence is that of Phenylalanine--tRNA ligase beta subunit from Staphylococcus epidermidis (strain ATCC 12228 / FDA PCI 1200).